The chain runs to 257 residues: Aspartate/glutamate leucyltransferase (257 aa).

Belongs to the R-transferase family. Bpt subfamily.

The protein localises to the cytoplasm. It carries out the reaction N-terminal L-glutamyl-[protein] + L-leucyl-tRNA(Leu) = N-terminal L-leucyl-L-glutamyl-[protein] + tRNA(Leu) + H(+). The catalysed reaction is N-terminal L-aspartyl-[protein] + L-leucyl-tRNA(Leu) = N-terminal L-leucyl-L-aspartyl-[protein] + tRNA(Leu) + H(+). In terms of biological role, functions in the N-end rule pathway of protein degradation where it conjugates Leu from its aminoacyl-tRNA to the N-termini of proteins containing an N-terminal aspartate or glutamate. This chain is Aspartate/glutamate leucyltransferase, found in Leptospira interrogans serogroup Icterohaemorrhagiae serovar copenhageni (strain Fiocruz L1-130).